Consider the following 162-residue polypeptide: Ecotin (162 aa).

The signal sequence occupies residues 1–18; the sequence is MFVPAVVFAALASTSAWA. Cys-70 and Cys-107 are joined by a disulfide.

Belongs to the protease inhibitor I11 (ecotin) family. In terms of assembly, homodimer.

It is found in the periplasm. Its function is as follows. General inhibitor of pancreatic serine proteases: inhibits chymotrypsin, trypsin, elastases, factor X, kallikrein as well as a variety of other proteases. This Salmonella choleraesuis (strain SC-B67) protein is Ecotin.